Here is a 384-residue protein sequence, read N- to C-terminus: MPPIAQEGNCLIYRGSNFLKQRLILACLSGKPVKISQIRSEDETAPGLREYEISLIRLLDKITNGTKIELNPAGTSVMFSPGLLHGGQLNHDCCVQRGIGYYLDALIALGPFCKSPLQCTLRGVTNSKDSPSVDHIKGAALSLLKRFLLVDEGLELKVVRRGVAPLGGGEIIFRCPVRKSLRAIQFQSQGMVKRIRGTVYACKVSPAMANRTVEAAKGCMLKFLPDVYIYTDQNKGKMSGNSPGFGICLIAETTDGVCFAADCCSNTREESEDTPSIPENLGKEVALRLLDEIYRGGCVDSSYQWLAALYIALGQKHVSKFLTGALSNYTVHFLQHLRDFFSITFKLENPEAEDEDEAENVRGAQKVLMACVGIGYTNINKRVI.

This sequence belongs to the RNA 3'-terminal cyclase family. Type 2 subfamily. In terms of assembly, part of the small subunit (SSU) processome, composed of more than 70 proteins and the RNA chaperone small nucleolar RNA (snoRNA) U3.

Its subcellular location is the nucleus. It is found in the nucleolus. Its function is as follows. Part of the small subunit (SSU) processome, first precursor of the small eukaryotic ribosomal subunit. During the assembly of the SSU processome in the nucleolus, many ribosome biogenesis factors, an RNA chaperone and ribosomal proteins associate with the nascent pre-rRNA and work in concert to generate RNA folding, modifications, rearrangements and cleavage as well as targeted degradation of pre-ribosomal RNA by the RNA exosome. Does not have cyclase activity. This chain is Probable RNA 3'-terminal phosphate cyclase-like protein (Rtc1), found in Drosophila melanogaster (Fruit fly).